Reading from the N-terminus, the 26-residue chain is Nicotinic acetylcholine receptor-binding protein Mnn-1A (26 aa).

An intrachain disulfide couples C3 to C22.

The protein belongs to the three-finger toxin family. Short-chain subfamily. In terms of tissue distribution, expressed by the venom gland.

The protein resides in the secreted. Functionally, binds and may inhibit nicotinic acetylcholine receptors (nAChR). The sequence is that of Nicotinic acetylcholine receptor-binding protein Mnn-1A from Micrurus nigrocinctus (Central American coral snake).